The following is a 334-amino-acid chain: Putative binding protein YtlA (334 aa).

An N-terminal signal peptide occupies residues 1–23 (MNRWLRLGFACVGSIFLMFALAA). The N-palmitoyl cysteine moiety is linked to residue Cys-24. The S-diacylglycerol cysteine moiety is linked to residue Cys-24.

Belongs to the bacterial solute-binding protein SsuA/TauA family.

It is found in the cell membrane. In Bacillus subtilis (strain 168), this protein is Putative binding protein YtlA (ytlA).